The following is a 154-amino-acid chain: Neurotrophin-3 (154 aa).

An N-terminal signal peptide occupies residues 1–18 (MSILFYVMFLAYLRGVQG). Residues 19–134 (NSMDQRSLPE…VNSRSPRRKR (116 aa)) constitute a propeptide that is removed on maturation.

This sequence belongs to the NGF-beta family.

The protein resides in the secreted. Seems to promote the survival of visceral and proprioceptive sensory neurons. In Cervus elaphus (Red deer), this protein is Neurotrophin-3 (NTF3).